The following is a 1205-amino-acid chain: Plasma membrane calcium-transporting ATPase 4 (1205 aa).

At M1–A100 the chain is on the cytoplasmic side. Residues L101 to F121 form a helical membrane-spanning segment. Residues Y122–T147 are Extracellular-facing. Residues G148 to F168 form a helical membrane-spanning segment. Residues N169–L369 are Cytoplasmic-facing. Residues D294 to D318 are disordered. S329 and S335 each carry phosphoserine. A helical transmembrane segment spans residues I370 to I390. Over Q391 to K409 the chain is Extracellular. Residues F410–V430 form a helical membrane-spanning segment. Topologically, residues T431–F844 are cytoplasmic. Catalysis depends on D466, which acts as the 4-aspartylphosphate intermediate. Residues D786 and D790 each coordinate Mg(2+). A helical transmembrane segment spans residues L845–I865. Residues T866–K872 lie on the Extracellular side of the membrane. The chain crosses the membrane as a helical span at residues A873–T893. Residues E894–K919 lie on the Cytoplasmic side of the membrane. Residues N920–L942 traverse the membrane as a helical segment. At F943 to P956 the chain is on the extracellular side. The chain crosses the membrane as a helical span at residues P957–A979. Topologically, residues R980–N995 are cytoplasmic. A helical transmembrane segment spans residues I996–G1016. Residues G1017–Q1029 lie on the Extracellular side of the membrane. A helical membrane pass occupies residues W1030–I1050. The Cytoplasmic segment spans residues P1051 to V1205. 2 positions are modified to phosphoserine: S1065 and S1071. R1072 is subject to Omega-N-methylarginine. The segment at L1087–Q1104 is calmodulin-binding subdomain A. Position 1103 is a phosphothreonine; by PKC (T1103). The calmodulin-binding subdomain B stretch occupies residues I1105 to N1114. S1145 carries the phosphoserine modification.

This sequence belongs to the cation transport ATPase (P-type) (TC 3.A.3) family. Type IIB subfamily. As to quaternary structure, interacts with PDZD11. Interacts with SLC35G1 and STIM1. Interacts with calmodulin. As to expression, specifically expressed by sperm in testis (at protein level).

The protein resides in the membrane. The protein localises to the cell projection. Its subcellular location is the cilium. It localises to the flagellum membrane. It catalyses the reaction Ca(2+)(in) + ATP + H2O = Ca(2+)(out) + ADP + phosphate + H(+). Activated by calcium/calmodulin. In terms of biological role, calcium/calmodulin-regulated and magnesium-dependent enzyme that catalyzes the hydrolysis of ATP coupled with the transport of calcium out of the cell. By regulating sperm cell calcium homeostasis, may play a role in sperm motility. In Mus musculus (Mouse), this protein is Plasma membrane calcium-transporting ATPase 4.